Consider the following 375-residue polypeptide: Carbamoyl phosphate synthase small chain (375 aa).

Positions 1–184 are CPSase; that stretch reads MVSLYLENGL…LDYKPFDEKI (184 aa). Positions 44, 240, and 242 each coordinate L-glutamine. One can recognise a Glutamine amidotransferase type-1 domain in the interval 188–375; that stretch reads IIAVLDFGAK…KEFVGLLEGF (188 aa). The Nucleophile role is filled by C268. L269, Q272, N310, and Y313 together coordinate L-glutamine. Catalysis depends on residues H351 and E353.

This sequence belongs to the CarA family. As to quaternary structure, composed of two chains; the small (or glutamine) chain promotes the hydrolysis of glutamine to ammonia, which is used by the large (or ammonia) chain to synthesize carbamoyl phosphate. Tetramer of heterodimers (alpha,beta)4.

The catalysed reaction is hydrogencarbonate + L-glutamine + 2 ATP + H2O = carbamoyl phosphate + L-glutamate + 2 ADP + phosphate + 2 H(+). The enzyme catalyses L-glutamine + H2O = L-glutamate + NH4(+). The protein operates within amino-acid biosynthesis; L-arginine biosynthesis; carbamoyl phosphate from bicarbonate: step 1/1. It functions in the pathway pyrimidine metabolism; UMP biosynthesis via de novo pathway; (S)-dihydroorotate from bicarbonate: step 1/3. Functionally, small subunit of the glutamine-dependent carbamoyl phosphate synthetase (CPSase). CPSase catalyzes the formation of carbamoyl phosphate from the ammonia moiety of glutamine, carbonate, and phosphate donated by ATP, constituting the first step of 2 biosynthetic pathways, one leading to arginine and/or urea and the other to pyrimidine nucleotides. The small subunit (glutamine amidotransferase) binds and cleaves glutamine to supply the large subunit with the substrate ammonia. In Helicobacter pylori (strain J99 / ATCC 700824) (Campylobacter pylori J99), this protein is Carbamoyl phosphate synthase small chain.